A 128-amino-acid chain; its full sequence is Probable 4-amino-4-deoxy-L-arabinose-phosphoundecaprenol flippase subunit ArnF (128 aa).

Over 1-2 the chain is Cytoplasmic; it reads MG. Residues 3-23 form a helical membrane-spanning segment; sequence LIWGLFSVIIASVAQLSLGFA. Topologically, residues 24–35 are periplasmic; the sequence is ASHLPPMTHLWD. Residues 36-56 form a helical membrane-spanning segment; sequence FIAALLAFGLDARILLLGLLG. At 57-75 the chain is on the cytoplasmic side; that stretch reads YLLSVFCWYKTLHKLALSK. Residues 76 to 96 traverse the membrane as a helical segment; it reads AYALLSMSYVLVWIASMVLPG. The Periplasmic segment spans residues 97 to 100; the sequence is REGT. Residues 101–121 form a helical membrane-spanning segment; it reads FSLKALLGVACIMSGLMLIFL. Topologically, residues 122-128 are cytoplasmic; that stretch reads PTTKQRY.

This sequence belongs to the ArnF family. Heterodimer of ArnE and ArnF.

Its subcellular location is the cell inner membrane. The protein operates within bacterial outer membrane biogenesis; lipopolysaccharide biosynthesis. Translocates 4-amino-4-deoxy-L-arabinose-phosphoundecaprenol (alpha-L-Ara4N-phosphoundecaprenol) from the cytoplasmic to the periplasmic side of the inner membrane. This Shigella flexneri serotype 5b (strain 8401) protein is Probable 4-amino-4-deoxy-L-arabinose-phosphoundecaprenol flippase subunit ArnF.